The following is a 486-amino-acid chain: MHDKTLTELAAGLRAGEFSSRELCQSALDRIQRLDGDLNSFISVTAEQALADADAADQARASGDAAALAGLPLALKDIFCTQGVRTSCGSKMLDSFVAPYDATVVEKIRQAGGVSLGKTNMDEFAMGSSNENSFYGPVKNPWDLSAVPGGSSGGSAAAVAAGLVPAALGTDTGGSIRQPAAFCGITGLKPTYGRVSRYGMVAYASSLDQGGPMARTAADCALLLETIAGHDVRDSTSVARVVPDYSAELDTSLAGLKIGLPKEYFGDGLDPEVETAVREAIKVYESLGAKVCEVSLPHTHLAIPAYYVIAPAEASSNLSRYDGVRFGHRCEDPTDLEDLYKRTRAEGFGEEVKRRILIGTHTLSEGFFDAYYLKAQQVRRLIRQDFLDAFDEVDVLMGPTAPTPAFDLGAQKDPVSMYLQDIYTIAVNLAGIPGISVPAGFAGNRPVGLQVLAPHFAEAQLLGVAHQFQQATDWHLKRPAFGKEMA.

Residues K76 and S151 each act as charge relay system in the active site. S175 (acyl-ester intermediate) is an active-site residue.

This sequence belongs to the amidase family. GatA subfamily. Heterotrimer of A, B and C subunits.

The catalysed reaction is L-glutamyl-tRNA(Gln) + L-glutamine + ATP + H2O = L-glutaminyl-tRNA(Gln) + L-glutamate + ADP + phosphate + H(+). Functionally, allows the formation of correctly charged Gln-tRNA(Gln) through the transamidation of misacylated Glu-tRNA(Gln) in organisms which lack glutaminyl-tRNA synthetase. The reaction takes place in the presence of glutamine and ATP through an activated gamma-phospho-Glu-tRNA(Gln). The protein is Glutamyl-tRNA(Gln) amidotransferase subunit A of Chromohalobacter salexigens (strain ATCC BAA-138 / DSM 3043 / CIP 106854 / NCIMB 13768 / 1H11).